Consider the following 425-residue polypeptide: Riboflavin biosynthesis protein RibBA (425 aa).

Positions 1-204 are DHBP synthase; that stretch reads MTRLDSVERA…IADLIEWRRK (204 aa). Residues 28-29, Asp33, 141-145, and Glu165 each bind D-ribulose 5-phosphate; these read RE and RPGHT. Glu29 lines the Mg(2+) pocket. His144 is a Mg(2+) binding site. The interval 205 to 425 is GTP cyclohydrolase II; the sequence is HEKHIERIAE…HLPGEFGGAL (221 aa). 259-263 is a binding site for GTP; that stretch reads RVHSE. Residues Cys264, Cys275, and Cys277 each coordinate Zn(2+). Residues Gln280, 303–305, and Thr325 each bind GTP; that span reads EGR. Catalysis depends on Asp337, which acts as the Proton acceptor; for GTP cyclohydrolase activity. Catalysis depends on Arg339, which acts as the Nucleophile; for GTP cyclohydrolase activity. GTP is bound by residues Thr360 and Lys365.

This sequence in the N-terminal section; belongs to the DHBP synthase family. The protein in the C-terminal section; belongs to the GTP cyclohydrolase II family. Mg(2+) is required as a cofactor. It depends on Mn(2+) as a cofactor. Zn(2+) serves as cofactor.

The enzyme catalyses D-ribulose 5-phosphate = (2S)-2-hydroxy-3-oxobutyl phosphate + formate + H(+). It catalyses the reaction GTP + 4 H2O = 2,5-diamino-6-hydroxy-4-(5-phosphoribosylamino)-pyrimidine + formate + 2 phosphate + 3 H(+). Its pathway is cofactor biosynthesis; riboflavin biosynthesis; 2-hydroxy-3-oxobutyl phosphate from D-ribulose 5-phosphate: step 1/1. The protein operates within cofactor biosynthesis; riboflavin biosynthesis; 5-amino-6-(D-ribitylamino)uracil from GTP: step 1/4. In terms of biological role, catalyzes the conversion of D-ribulose 5-phosphate to formate and 3,4-dihydroxy-2-butanone 4-phosphate. Its function is as follows. Catalyzes the conversion of GTP to 2,5-diamino-6-ribosylamino-4(3H)-pyrimidinone 5'-phosphate (DARP), formate and pyrophosphate. The sequence is that of Riboflavin biosynthesis protein RibBA from Mycolicibacterium paratuberculosis (strain ATCC BAA-968 / K-10) (Mycobacterium paratuberculosis).